The sequence spans 333 residues: UDP-N-acetylglucosamine--N-acetylmuramyl-(pentapeptide) pyrophosphoryl-undecaprenol N-acetylglucosamine transferase (333 aa).

UDP-N-acetyl-alpha-D-glucosamine is bound by residues 10–12 (TGG), asparagine 124, serine 177, and glutamine 275.

This sequence belongs to the glycosyltransferase 28 family. MurG subfamily.

It localises to the cell inner membrane. The enzyme catalyses di-trans,octa-cis-undecaprenyl diphospho-N-acetyl-alpha-D-muramoyl-L-alanyl-D-glutamyl-meso-2,6-diaminopimeloyl-D-alanyl-D-alanine + UDP-N-acetyl-alpha-D-glucosamine = di-trans,octa-cis-undecaprenyl diphospho-[N-acetyl-alpha-D-glucosaminyl-(1-&gt;4)]-N-acetyl-alpha-D-muramoyl-L-alanyl-D-glutamyl-meso-2,6-diaminopimeloyl-D-alanyl-D-alanine + UDP + H(+). The protein operates within cell wall biogenesis; peptidoglycan biosynthesis. In terms of biological role, cell wall formation. Catalyzes the transfer of a GlcNAc subunit on undecaprenyl-pyrophosphoryl-MurNAc-pentapeptide (lipid intermediate I) to form undecaprenyl-pyrophosphoryl-MurNAc-(pentapeptide)GlcNAc (lipid intermediate II). The polypeptide is UDP-N-acetylglucosamine--N-acetylmuramyl-(pentapeptide) pyrophosphoryl-undecaprenol N-acetylglucosamine transferase (Nitratiruptor sp. (strain SB155-2)).